The following is a 374-amino-acid chain: Ribosomal RNA large subunit methyltransferase G (374 aa).

Belongs to the methyltransferase superfamily. RlmG family.

The protein localises to the cytoplasm. The catalysed reaction is guanosine(1835) in 23S rRNA + S-adenosyl-L-methionine = N(2)-methylguanosine(1835) in 23S rRNA + S-adenosyl-L-homocysteine + H(+). Its function is as follows. Specifically methylates the guanine in position 1835 (m2G1835) of 23S rRNA. The chain is Ribosomal RNA large subunit methyltransferase G from Pseudomonas paraeruginosa (strain DSM 24068 / PA7) (Pseudomonas aeruginosa (strain PA7)).